A 75-amino-acid polypeptide reads, in one-letter code: Tetrahydromethanopterin S-methyltransferase subunit F (75 aa).

The helical transmembrane segment at 53–73 (FAGLACGMVFAGVLLVPLLLL) threads the bilayer.

It belongs to the MtrF family. In terms of assembly, the complex is composed of 8 subunits; MtrA, MtrB, MtrC, MtrD, MtrE, MtrF, MtrG and MtrH.

The protein localises to the cell membrane. The enzyme catalyses 5-methyl-5,6,7,8-tetrahydromethanopterin + coenzyme M + 2 Na(+)(in) = 5,6,7,8-tetrahydromethanopterin + methyl-coenzyme M + 2 Na(+)(out). It participates in one-carbon metabolism; methanogenesis from CO(2); methyl-coenzyme M from 5,10-methylene-5,6,7,8-tetrahydromethanopterin: step 2/2. Its function is as follows. Part of a complex that catalyzes the formation of methyl-coenzyme M and tetrahydromethanopterin from coenzyme M and methyl-tetrahydromethanopterin. This is an energy-conserving, sodium-ion translocating step. This chain is Tetrahydromethanopterin S-methyltransferase subunit F, found in Methanopyrus kandleri (strain AV19 / DSM 6324 / JCM 9639 / NBRC 100938).